Reading from the N-terminus, the 125-residue chain is Large ribosomal subunit protein bL12 (125 aa).

It belongs to the bacterial ribosomal protein bL12 family. In terms of assembly, homodimer. Part of the ribosomal stalk of the 50S ribosomal subunit. Forms a multimeric L10(L12)X complex, where L10 forms an elongated spine to which 2 to 4 L12 dimers bind in a sequential fashion. Binds GTP-bound translation factors.

Forms part of the ribosomal stalk which helps the ribosome interact with GTP-bound translation factors. Is thus essential for accurate translation. The protein is Large ribosomal subunit protein bL12 of Liberibacter africanus (Citrus greening disease).